We begin with the raw amino-acid sequence, 168 residues long: Thermonuclease (168 aa).

A signal peptide spans 1–27 (MKKITTGVLILAIAIVVLIFQYINGDG). Residues Arg64, Glu72, and Arg114 contribute to the active site.

This sequence belongs to the thermonuclease family. It depends on Ca(2+) as a cofactor.

Its subcellular location is the secreted. It catalyses the reaction Endonucleolytic cleavage to nucleoside 3'-phosphates and 3'-phosphooligonucleotide end-products.. Enzyme that catalyzes the hydrolysis of both DNA and RNA at the 5'-position of the phosphodiester bond. The polypeptide is Thermonuclease (nucI) (Staphylococcus intermedius).